The chain runs to 323 residues: Galectin-4 (323 aa).

Galectin domains lie at 19-150 and 194-323; these read YYKP…INFI and YKTR…YVQI. Residue 256-262 participates in a beta-D-galactoside binding; sequence WGAEERK.

Monomer.

In terms of biological role, galectin that binds lactose and a related range of sugars. May be involved in the assembly of adherens junctions. The polypeptide is Galectin-4 (LGALS4) (Sus scrofa (Pig)).